The chain runs to 151 residues: MKKIDVKILDSRIGNEFPLPAYATSGSAGLDLRALIEEGFDLQPGETKLIPTGLSIYIADPNLAAVILPRSGLGHKHGIVLGNLVGLIDSDYQGPLMVSMWNRGEQPFRIEVGDRIAQLVFVPVVQAEFNIVTDFTQTERGEGGFGHSGKQ.

Residues 70-72, N83, 87-89, and M97 each bind substrate; these read RSG and LID.

The protein belongs to the dUTPase family. Mg(2+) is required as a cofactor.

It carries out the reaction dUTP + H2O = dUMP + diphosphate + H(+). Its pathway is pyrimidine metabolism; dUMP biosynthesis; dUMP from dCTP (dUTP route): step 2/2. This enzyme is involved in nucleotide metabolism: it produces dUMP, the immediate precursor of thymidine nucleotides and it decreases the intracellular concentration of dUTP so that uracil cannot be incorporated into DNA. This Mannheimia succiniciproducens (strain KCTC 0769BP / MBEL55E) protein is Deoxyuridine 5'-triphosphate nucleotidohydrolase.